Consider the following 504-residue polypeptide: Anaerobic nitric oxide reductase transcription regulator NorR (504 aa).

At aspartate 57 the chain carries 4-aspartylphosphate. Residues 187–416 form the Sigma-54 factor interaction domain; it reads MIGLSPGMTQ…LEHAIHRAVV (230 aa). ATP is bound by residues 215 to 222 and 278 to 287; these read GETGTGKE and ADNGTLFLDE. The segment at residues 479 to 498 is a DNA-binding region (H-T-H motif); sequence WAACARMLETDVANLHRLAK.

Its pathway is nitrogen metabolism; nitric oxide reduction. In terms of biological role, required for the expression of anaerobic nitric oxide (NO) reductase, acts as a transcriptional activator for at least the norVW operon. Activation also requires sigma-54. This is Anaerobic nitric oxide reductase transcription regulator NorR from Shigella boydii serotype 4 (strain Sb227).